A 2299-amino-acid polypeptide reads, in one-letter code: Protein Ycf2 (2299 aa).

Residue 1642–1649 participates in ATP binding; that stretch reads GSIGTGRS.

Belongs to the Ycf2 family.

The protein resides in the plastid. It is found in the chloroplast stroma. Its function is as follows. Probable ATPase of unknown function. Its presence in a non-photosynthetic plant (Epifagus virginiana) and experiments in tobacco indicate that it has an essential function which is probably not related to photosynthesis. The sequence is that of Protein Ycf2 from Nandina domestica (Heavenly bamboo).